A 146-amino-acid chain; its full sequence is Hemoglobin subunit beta-1 (146 aa).

In terms of domain architecture, Globin spans 2–146; the sequence is HWTAEEKSAI…VAHALAHRYH (145 aa). His-63 and His-92 together coordinate heme b.

The protein belongs to the globin family. As to quaternary structure, heterotetramer of two alpha chains and two beta chains. Red blood cells.

Involved in oxygen transport from the lung to the various peripheral tissues. The protein is Hemoglobin subunit beta-1 of Drymarchon melanurus erebennus (Texas indigo snake).